We begin with the raw amino-acid sequence, 518 residues long: MNFTKRPFLLTILDGWGYSPEVEGNAIHAANTPNLDDLLETYPNTLLSASGEDVGLPEGQMGNSEVGHLNIGAGRVVYQDLTRINRDIGNGDFFKNPVLKQAIENAKAQGSALHLMGLFSYGGVHSHMKHLRALIEFAKDEGITEIFIHAFLDGRDVSPRAALEDMKEHVEYCNNLSVGKIATVSGRYYAMDRDNRWDRTEDAYNAITRGDGVYYSKGPVDAISEGYGRGENDEFIKPTVIVDENGRPIGRMNENDTVIFFNFRPDRARQLTYAFVNDEFDNFERKSHPKVHFVCMTEYDEKLEVPIAFPSEELKNTLGEVLSKEGIKQLRIAETEKYAHVTFFFNGGVEKQNEGEERCLIPSPKVATYDLKPEMSAYEVTEELIERIGSGKYDVIVLNLANMDMVGHSGIMEAAVKAVEVVDDCVGKIITAIKEVGGEAMVMADHGNAEKMVEFCNNTERQCYTAHTSNPVRCIYVTQEKRVELQKGRLSDVAPTILKIMGIEKPPEMTGVPLIKNT.

Residues Asp14 and Ser64 each coordinate Mn(2+). The active-site Phosphoserine intermediate is the Ser64. Residues His125, 155-156 (RD), Arg187, Arg193, 264-267 (RPDR), and Lys337 each bind substrate. Mn(2+) contacts are provided by Asp404, His408, Asp445, His446, and His467.

It belongs to the BPG-independent phosphoglycerate mutase family. The cofactor is Mn(2+).

It carries out the reaction (2R)-2-phosphoglycerate = (2R)-3-phosphoglycerate. It functions in the pathway carbohydrate degradation; glycolysis; pyruvate from D-glyceraldehyde 3-phosphate: step 3/5. Its function is as follows. Catalyzes the interconversion of 2-phosphoglycerate and 3-phosphoglycerate. The sequence is that of 2,3-bisphosphoglycerate-independent phosphoglycerate mutase from Methanococcoides burtonii (strain DSM 6242 / NBRC 107633 / OCM 468 / ACE-M).